Reading from the N-terminus, the 107-residue chain is Iron-sulfur cluster assembly protein CyaY (107 aa).

Belongs to the frataxin family.

Involved in iron-sulfur (Fe-S) cluster assembly. May act as a regulator of Fe-S biogenesis. This chain is Iron-sulfur cluster assembly protein CyaY, found in Neisseria gonorrhoeae (strain ATCC 700825 / FA 1090).